Consider the following 941-residue polypeptide: Glycine dehydrogenase (decarboxylating) (941 aa).

N6-(pyridoxal phosphate)lysine is present on Lys-692.

The protein belongs to the GcvP family. The glycine cleavage system is composed of four proteins: P, T, L and H. It depends on pyridoxal 5'-phosphate as a cofactor.

It carries out the reaction N(6)-[(R)-lipoyl]-L-lysyl-[glycine-cleavage complex H protein] + glycine + H(+) = N(6)-[(R)-S(8)-aminomethyldihydrolipoyl]-L-lysyl-[glycine-cleavage complex H protein] + CO2. Functionally, the glycine cleavage system catalyzes the degradation of glycine. The P protein binds the alpha-amino group of glycine through its pyridoxal phosphate cofactor; CO(2) is released and the remaining methylamine moiety is then transferred to the lipoamide cofactor of the H protein. This is Glycine dehydrogenase (decarboxylating) from Mycolicibacterium paratuberculosis (strain ATCC BAA-968 / K-10) (Mycobacterium paratuberculosis).